Consider the following 284-residue polypeptide: Pantothenate synthetase (284 aa).

ATP is bound at residue 30-37 (MGNLHDGH). His-37 functions as the Proton donor in the catalytic mechanism. Gln-61 lines the (R)-pantoate pocket. Gln-61 serves as a coordination point for beta-alanine. 149 to 152 (GEKD) is an ATP binding site. Gln-155 provides a ligand contact to (R)-pantoate. ATP contacts are provided by residues Val-178 and 186 to 189 (LSSR).

It belongs to the pantothenate synthetase family. In terms of assembly, homodimer.

It is found in the cytoplasm. The enzyme catalyses (R)-pantoate + beta-alanine + ATP = (R)-pantothenate + AMP + diphosphate + H(+). It participates in cofactor biosynthesis; (R)-pantothenate biosynthesis; (R)-pantothenate from (R)-pantoate and beta-alanine: step 1/1. In terms of biological role, catalyzes the condensation of pantoate with beta-alanine in an ATP-dependent reaction via a pantoyl-adenylate intermediate. The chain is Pantothenate synthetase from Klebsiella pneumoniae (strain 342).